Reading from the N-terminus, the 359-residue chain is Peptide chain release factor 1 (359 aa).

Q235 bears the N5-methylglutamine mark.

The protein belongs to the prokaryotic/mitochondrial release factor family. In terms of processing, methylated by PrmC. Methylation increases the termination efficiency of RF1.

The protein localises to the cytoplasm. Functionally, peptide chain release factor 1 directs the termination of translation in response to the peptide chain termination codons UAG and UAA. This Nitrosomonas europaea (strain ATCC 19718 / CIP 103999 / KCTC 2705 / NBRC 14298) protein is Peptide chain release factor 1.